Reading from the N-terminus, the 520-residue chain is J protein JJJ2 (520 aa).

In terms of domain architecture, J spans 7–71 (TYYSVLGLPT…SSKQEYDAIL (65 aa)). 2 disordered regions span residues 82 to 257 (LGYK…DLQN) and 389 to 409 (FESS…RGRP). A compositionally biased stretch (low complexity) spans 91–100 (QNQSNNLNQQ). The span at 152 to 182 (TSKNSKEQQGSQETTNTSENLQRNAKGNKNN) shows a compositional bias: polar residues. Over residues 397 to 409 (ENHRSDFNLRGRP) the composition is skewed to basic and acidic residues.

Its subcellular location is the cytoplasm. The protein localises to the nucleus. This Vanderwaltozyma polyspora (strain ATCC 22028 / DSM 70294 / BCRC 21397 / CBS 2163 / NBRC 10782 / NRRL Y-8283 / UCD 57-17) (Kluyveromyces polysporus) protein is J protein JJJ2 (JJJ2).